We begin with the raw amino-acid sequence, 256 residues long: Probable septum site-determining protein MinC (256 aa).

Residues 105–143 (RRGATAKPEPADEAEPPVAAAAAEAVPEPAPELAPSAPT) are disordered. A compositionally biased stretch (low complexity) spans 120 to 142 (PPVAAAAAEAVPEPAPELAPSAP).

Belongs to the MinC family. In terms of assembly, interacts with MinD and FtsZ.

In terms of biological role, cell division inhibitor that blocks the formation of polar Z ring septums. Rapidly oscillates between the poles of the cell to destabilize FtsZ filaments that have formed before they mature into polar Z rings. Prevents FtsZ polymerization. The chain is Probable septum site-determining protein MinC from Burkholderia vietnamiensis (strain G4 / LMG 22486) (Burkholderia cepacia (strain R1808)).